The primary structure comprises 612 residues: Putative zinc metalloproteinase C607.06c (612 aa).

H303 contacts Zn(2+). E304 is an active-site residue. Zn(2+)-binding residues include H307 and H313. In terms of domain architecture, Jacalin-type lectin spans 477–612 (VYRSERYGLR…FMDSIGFFIK (136 aa)).

This sequence belongs to the peptidase M10B family. The cofactor is Zn(2+).

The polypeptide is Putative zinc metalloproteinase C607.06c (Schizosaccharomyces pombe (strain 972 / ATCC 24843) (Fission yeast)).